A 478-amino-acid polypeptide reads, in one-letter code: Zinc finger C3HC-type protein 1-like (478 aa).

A C3HC-type zinc finger spans residues 93–147 (CAKYGWSNIECDMLKCSSCNAYLCASLQPVLDFSKYKQRCVELQEALRKAHEKFC). Positions 285-389 (LSAPNTPVSP…SSSSDTSPRG (105 aa)) are disordered. Polar residues predominate over residues 351-363 (SMGQGESSGLSNE). Low complexity predominate over residues 377 to 388 (LCSSSSSDTSPR).

Post-translationally, phosphorylated. May also be weakly phosphorylated on Tyr residues.

It localises to the nucleus. It is found in the nucleus envelope. Functionally, required for proper positioning of a substantial amount of TPR at the nuclear basket (NB) through interaction with TPR. The polypeptide is Zinc finger C3HC-type protein 1-like (zc3hc1) (Xenopus tropicalis (Western clawed frog)).